We begin with the raw amino-acid sequence, 61 residues long: Temporin-ALi (61 aa).

A signal peptide spans 1 to 22 (MFPLKKSLLLLFFLATINLSLC). The propeptide occupies 23-46 (EQERNAEEERRDEPDERNAEVEKR). At Leu59 the chain carries Leucine amide.

Belongs to the frog skin active peptide (FSAP) family. Temporin subfamily. Expressed by the skin glands.

The protein localises to the secreted. Its function is as follows. Antimicrobial peptide with activity against Gram-positive and Gram-negative bacteria and against fungi. Has been tested against S.aureus (MIC=7.5 ug/mL), B.pumilus (MIC=7.5 ug/mL), B.cereus (MIC=75.0 ug/mL), E.coli (MIC=7.5 ug/mL), B.dysenteriae (MIC=20.0 ug/mL), A.cacoaceticus (MIC=60.0 ug/mL), P.aeruginosa (MIC=5.0 ug/mL) and C.albicans (MIC=5.0 ug/mL). Also shows a weak hemolytic activity. In Amolops loloensis (Lolokou Sucker Frog), this protein is Temporin-ALi.